We begin with the raw amino-acid sequence, 116 residues long: Large ribosomal subunit protein bL20 (116 aa).

The protein belongs to the bacterial ribosomal protein bL20 family.

Functionally, binds directly to 23S ribosomal RNA and is necessary for the in vitro assembly process of the 50S ribosomal subunit. It is not involved in the protein synthesizing functions of that subunit. This chain is Large ribosomal subunit protein bL20, found in Hydrogenobaculum sp. (strain Y04AAS1).